The chain runs to 431 residues: E3 ubiquitin-protein ligase RNF128 (431 aa).

The N-terminal stretch at 1 to 38 is a signal peptide; that stretch reads MGQLPGAGVFCRGGCGFSRLLAWCFLLVLSPQTPGSRG. 3 N-linked (GlcNAc...) asparagine glycosylation sites follow: N48, N59, and N101. Positions 75 to 186 constitute a PA domain; the sequence is SPLEPVAGVL…LKGTKILQSI (112 aa). A helical transmembrane segment spans residues 211-231; it reads IFFVSVSFFIITAATVGYFIF. The segment at 280 to 321 adopts an RING-type; atypical zinc-finger fold; sequence CAVCIELYKPNDLVRILTCNHVFHKTCVDPWLLEHRTCPMCK. Polar residues predominate over residues 345–354; it reads VSNETSSNAS. The interval 345-431 is disordered; sequence VSNETSSNAS…QETTVREIKS (87 aa).

Auto-ubiquitinated. Controls the development of T-cell clonal anergy by ubiquitination.

It localises to the cytoplasm. Its subcellular location is the endomembrane system. It is found in the cytoskeleton. The protein localises to the perinuclear region. It carries out the reaction S-ubiquitinyl-[E2 ubiquitin-conjugating enzyme]-L-cysteine + [acceptor protein]-L-lysine = [E2 ubiquitin-conjugating enzyme]-L-cysteine + N(6)-ubiquitinyl-[acceptor protein]-L-lysine.. Its pathway is protein modification; protein ubiquitination. Its function is as follows. E3 ubiquitin-protein ligase that catalyzes 'Lys-27', 'Lys-48'- or 'Lys-63'-linked polyubiquitin chains formation and plays a role in different biological processes such as modulation of immune response, cytoskeletal dynamics or protein homeostasis. Inhibits IL2 and IL4 transcription, thereby playing an important role in the induction of the anergic phenotype, a long-term stable state of T-lymphocyte unresponsiveness to antigenic stimulation associated with the blockade of interleukin production. Ubiquitinates ARPC5 with 'Lys-48' linkages and COR1A with 'Lys-63' linkages leading to their degradation, down-regulation of these cytoskeletal components results in impaired lamellipodium formation and reduced accumulation of F-actin at the immunological synapse. Functions in the patterning of the dorsal ectoderm; sensitizes ectoderm to respond to neural-inducing signals. Plays a positive role in innate immune response by promoting 'Lys-63'-linked ubiquitination of TBK1 after RNA- or DNA-virus infection. Regulates alveolar macrophage activation and neutrophil infiltration by interacting with TLR4, targeting it for degradation, and inhibiting NF-kappa-B activation, hence decreasing pro-inflammatory cytokines. Negatively regulates the IL-3/STAT5 signaling pathway by facilitating 'Lys-27'-linked polyubiquitination of IL3RA leading to its degradation via lysosomal pathway. Directly regulates the N-glycosylation process in the endoplasmic reticulum by targeting the glycosyl-transferase RPN1 for ubiquitination and degradation. Other substrates targeted for degradation by RNF128 include transmembrane proteins CD40L, CD83 or the tetraspanin CD151. This Bos taurus (Bovine) protein is E3 ubiquitin-protein ligase RNF128 (RNF128).